We begin with the raw amino-acid sequence, 308 residues long: Ceramide synthase 1 LOH3 (308 aa).

A run of 6 helical transmembrane segments spans residues 25 to 45, 82 to 102, 128 to 148, 154 to 174, 213 to 233, and 258 to 278; these read VLPL…RFVF, CVYY…EPWF, LLYM…VFWE, FGVS…SYVC, FILF…FWIL, and YMFN…WVLM. Residues 73–287 enclose the TLC domain; it reads RKFKESAWKC…MYRMLVKQIQ (215 aa). Phosphoserine is present on residues Ser-298 and Ser-300.

Expressed ubiquitously at low levels. Not observed in pollen.

The protein resides in the endoplasmic reticulum membrane. It carries out the reaction (4R)-hydroxysphinganine + a fatty acyl-CoA = an N-acyl-(4R)-4-hydroxysphinganine + CoA + H(+). It catalyses the reaction a sphingoid base + tetracosanoyl-CoA = an N-tetracosanoyl-sphingoid base + CoA + H(+). The catalysed reaction is (4R)-hydroxysphinganine + hexadecanoyl-CoA = N-hexadecanoyl-(4R)-hydroxysphinganine + CoA + H(+). The enzyme catalyses (4R)-hydroxysphinganine + octadecanoyl-CoA = N-octadecanoyl-(4R)-hydroxysphinganine + CoA + H(+). It carries out the reaction (4R)-hydroxysphinganine + eicosanoyl-CoA = N-eicosanoyl-(4R)-hydroxysphinganine + CoA + H(+). It catalyses the reaction docosanoyl-CoA + (4R)-hydroxysphinganine = N-docosanoyl-(4R)-hydroxysphinganine + CoA + H(+). The catalysed reaction is hexacosanoyl-CoA + (4R)-hydroxysphinganine = N-hexacosanoyl-(4R)-hydroxysphinganine + CoA + H(+). The enzyme catalyses tetracosanoyl-CoA + (4R)-hydroxysphinganine = N-tetracosanoyl-(4R)-hydroxysphinganine + CoA + H(+). It carries out the reaction tetracosanoyl-CoA + sphing-4-enine = N-tetracosanoyl-sphing-4-enine + CoA + H(+). It catalyses the reaction sphinga-(4E,8Z)-dienine + tetracosanoyl-CoA = N-tetracosanoylsphinga-(4E,8Z)-dienine + CoA + H(+). The catalysed reaction is sphinga-(4E,8E)-dienine + tetracosanoyl-CoA = N-tetracosanoylsphinga-(4E,8E)-dienine + CoA + H(+). The enzyme catalyses (4R)-hydroxysphing-(8Z)-enine + tetracosanoyl-CoA = N-tetracosanoyl-(4R)-hydroxysphing-(8Z)-enine + CoA + H(+). It carries out the reaction (4R)-hydroxysphing-(8E)-enine + tetracosanoyl-CoA = N-tetracosanoyl-(4R)-hydroxysphing-(8E)-enine + CoA + H(+). Its pathway is sphingolipid metabolism. With respect to regulation, inhibited by the mycotoxin fumonisin B(1), a sphingosine analog mycotoxins produced by pathogenic fungi. Repressed by divalent cation such as magnesium Mg(2+), copper Cu(2+), zinc Zn(2+), manganese Mn(2+), calcium Ca(2+) and cobalt Co(2+). Its function is as follows. Essential for plant growth, promotes cell division in root meristems. Catalyzes the biosynthesis of ceramide sphingolipids with C(16) to C(28) fatty acids, structural membrane lipids involved in membrane trafficking (e.g. early endosomes) and cell polarity (e.g. polar auxin transport related proteins); active on a broad substrate spectrum, both regarding chain lengths of fatty acids and the sphingoid base, such as long-chain base (LCB) phytosphingosine (t18:0). Mediates resistance to sphinganine-analog mycotoxins (SAMs, e.g. fumonisin B(1)) by restoring the sphingolipid biosynthesis. Could salvage the transport of GPI-anchored proteins from the endoplasmic reticulum to the Golgi apparatus in ceramides-depleted cells after SAM exposure. Contributes to hypoxic conditions tolerance (e.g. submergences), especially in the dark, by promoting the formation of very-long-chain (VLC) ceramide species (22:1, 24:1 and 26:1) and of VLC unsaturated ceramides, which are modulating CTR1-mediated ethylene signaling leading to endoplasmic reticulum (ER)-to-nucleus translocation of EIN2 and EIN3. The protein is Ceramide synthase 1 LOH3 of Arabidopsis thaliana (Mouse-ear cress).